The following is a 176-amino-acid chain: Ribosome maturation factor RimM (176 aa).

A PRC barrel domain is found at 96–176 (PADEFYWRDL…QILVDWDPDF (81 aa)).

This sequence belongs to the RimM family. In terms of assembly, binds ribosomal protein uS19.

It localises to the cytoplasm. Functionally, an accessory protein needed during the final step in the assembly of 30S ribosomal subunit, possibly for assembly of the head region. Essential for efficient processing of 16S rRNA. May be needed both before and after RbfA during the maturation of 16S rRNA. It has affinity for free ribosomal 30S subunits but not for 70S ribosomes. This chain is Ribosome maturation factor RimM, found in Shewanella baltica (strain OS223).